The following is a 212-amino-acid chain: Protein-L-isoaspartate O-methyltransferase (212 aa).

The active site involves S61.

The protein belongs to the methyltransferase superfamily. L-isoaspartyl/D-aspartyl protein methyltransferase family.

Its subcellular location is the cytoplasm. It catalyses the reaction [protein]-L-isoaspartate + S-adenosyl-L-methionine = [protein]-L-isoaspartate alpha-methyl ester + S-adenosyl-L-homocysteine. Catalyzes the methyl esterification of L-isoaspartyl residues in peptides and proteins that result from spontaneous decomposition of normal L-aspartyl and L-asparaginyl residues. It plays a role in the repair and/or degradation of damaged proteins. The chain is Protein-L-isoaspartate O-methyltransferase from Pseudoalteromonas atlantica (strain T6c / ATCC BAA-1087).